The following is a 211-amino-acid chain: FMN-dependent NADH:quinone oxidoreductase (211 aa).

FMN is bound by residues 17–19, 102–105, and 146–149; these read SNS, MWNL, and SRGG.

This sequence belongs to the azoreductase type 1 family. In terms of assembly, homodimer. It depends on FMN as a cofactor.

The enzyme catalyses 2 a quinone + NADH + H(+) = 2 a 1,4-benzosemiquinone + NAD(+). It carries out the reaction N,N-dimethyl-1,4-phenylenediamine + anthranilate + 2 NAD(+) = 2-(4-dimethylaminophenyl)diazenylbenzoate + 2 NADH + 2 H(+). In terms of biological role, quinone reductase that provides resistance to thiol-specific stress caused by electrophilic quinones. Functionally, also exhibits azoreductase activity. Catalyzes the reductive cleavage of the azo bond in aromatic azo compounds to the corresponding amines. This chain is FMN-dependent NADH:quinone oxidoreductase, found in Macrococcus caseolyticus (strain JCSC5402) (Macrococcoides caseolyticum).